The following is a 132-amino-acid chain: Small ribosomal subunit protein uS11 (132 aa).

Belongs to the universal ribosomal protein uS11 family. In terms of assembly, part of the 30S ribosomal subunit. Interacts with proteins S7 and S18. Binds to IF-3.

Functionally, located on the platform of the 30S subunit, it bridges several disparate RNA helices of the 16S rRNA. Forms part of the Shine-Dalgarno cleft in the 70S ribosome. This is Small ribosomal subunit protein uS11 from Chlamydia muridarum (strain MoPn / Nigg).